The following is a 559-amino-acid chain: Probable D-2-hydroxyglutarate dehydrogenase, mitochondrial (559 aa).

The N-terminal 80 residues, M1–F80, are a transit peptide targeting the mitochondrion. An FAD-binding PCMH-type domain is found at Y131–K310.

This sequence belongs to the FAD-binding oxidoreductase/transferase type 4 family. In terms of assembly, homodimer. Requires FAD as cofactor.

The protein resides in the mitochondrion. The catalysed reaction is (R)-2-hydroxyglutarate + A = 2-oxoglutarate + AH2. Functionally, catalyzes the oxidation of D-2-hydroxyglutarate to alpha-ketoglutarate. The polypeptide is Probable D-2-hydroxyglutarate dehydrogenase, mitochondrial (D2HGDH) (Oryza sativa subsp. japonica (Rice)).